The chain runs to 303 residues: Protoheme IX farnesyltransferase (303 aa).

The next 9 helical transmembrane spans lie at 25-45 (MGLV…AVVM), 54-74 (IPQI…ACAL), 104-124 (LLLL…LLNI), 125-145 (PSGV…SIWS), 151-171 (WNTV…WVAI), 179-199 (AIAL…ALAI), 227-247 (FIWL…GVVF), 248-268 (VVLA…TFKK), and 280-300 (FIYS…VSLL).

Belongs to the UbiA prenyltransferase family. Protoheme IX farnesyltransferase subfamily. As to quaternary structure, interacts with CtaA.

The protein resides in the cell membrane. It carries out the reaction heme b + (2E,6E)-farnesyl diphosphate + H2O = Fe(II)-heme o + diphosphate. Its pathway is porphyrin-containing compound metabolism; heme O biosynthesis; heme O from protoheme: step 1/1. Converts heme B (protoheme IX) to heme O by substitution of the vinyl group on carbon 2 of heme B porphyrin ring with a hydroxyethyl farnesyl side group. In Staphylococcus aureus (strain Mu3 / ATCC 700698), this protein is Protoheme IX farnesyltransferase.